The primary structure comprises 128 residues: CD59 glycoprotein (128 aa).

The N-terminal stretch at 1–25 (MGIQGGSVLFGLLLVLAVFCHSGHS) is a signal peptide. In terms of domain architecture, UPAR/Ly6 spans 26 to 108 (LQCYNCPNPT…QLENGGTSLS (83 aa)). 5 disulfides stabilise this stretch: C28–C51, C31–C38, C44–C64, C70–C88, and C89–C94. Residue N43 is glycosylated (N-linked (GlcNAc...) asparagine). Residue N102 is the site of GPI-anchor amidated asparagine attachment. A propeptide spans 103–128 (GGTSLSEKTVVLLVTLLLAAAWCLHP) (removed in mature form).

In terms of assembly, interacts with T-cell surface antigen CD2. Post-translationally, N- and O-glycosylated.

It is found in the cell membrane. The protein resides in the secreted. Its function is as follows. Potent inhibitor of the complement membrane attack complex (MAC) action, which protects self-cells from damage during complement activation. Acts by binding to the beta-haipins of C8 (C8A and C8B) components of the assembling MAC, forming an intermolecular beta-sheet that prevents incorporation of the multiple copies of C9 required for complete formation of the osmolytic pore. This Chlorocebus aethiops (Green monkey) protein is CD59 glycoprotein.